Here is a 282-residue protein sequence, read N- to C-terminus: Pantothenate synthetase (282 aa).

Met-30–His-37 is a binding site for ATP. The Proton donor role is filled by His-37. Position 61 (Gln-61) interacts with (R)-pantoate. A beta-alanine-binding site is contributed by Gln-61. Gly-147 to Asp-150 contacts ATP. Gln-153 contributes to the (R)-pantoate binding site. Leu-184 to Arg-187 contributes to the ATP binding site.

The protein belongs to the pantothenate synthetase family. In terms of assembly, homodimer.

It is found in the cytoplasm. It carries out the reaction (R)-pantoate + beta-alanine + ATP = (R)-pantothenate + AMP + diphosphate + H(+). It participates in cofactor biosynthesis; (R)-pantothenate biosynthesis; (R)-pantothenate from (R)-pantoate and beta-alanine: step 1/1. Catalyzes the condensation of pantoate with beta-alanine in an ATP-dependent reaction via a pantoyl-adenylate intermediate. The chain is Pantothenate synthetase from Rhizorhabdus wittichii (strain DSM 6014 / CCUG 31198 / JCM 15750 / NBRC 105917 / EY 4224 / RW1) (Sphingomonas wittichii).